The following is a 48-amino-acid chain: Small polypeptide DEVIL 22 (48 aa).

The chain crosses the membrane as a helical span at residues 7-23; it reads KLNKGHAFTSKCASLVK. The interval 13–44 is required for DVL/RTFL small polypeptide activity; sequence AFTSKCASLVKEQRARLYILRRCATMLCCWYI.

The protein belongs to the DVL/RTFL small polypeptides family.

It localises to the cell membrane. Its function is as follows. Small polypeptide acting as a regulatory molecule which coordinates cellular responses required for differentiation, growth and development, probably by restricting polar cell proliferation in lateral organs and coordinating socket cell recruitment and differentiation at trichome sites. In Arabidopsis thaliana (Mouse-ear cress), this protein is Small polypeptide DEVIL 22.